We begin with the raw amino-acid sequence, 483 residues long: Glutamyl-tRNA(Gln) amidotransferase subunit A (483 aa).

Active-site charge relay system residues include lysine 76 and serine 151. The active-site Acyl-ester intermediate is the serine 175.

The protein belongs to the amidase family. GatA subfamily. Heterotrimer of A, B and C subunits.

It catalyses the reaction L-glutamyl-tRNA(Gln) + L-glutamine + ATP + H2O = L-glutaminyl-tRNA(Gln) + L-glutamate + ADP + phosphate + H(+). Allows the formation of correctly charged Gln-tRNA(Gln) through the transamidation of misacylated Glu-tRNA(Gln) in organisms which lack glutaminyl-tRNA synthetase. The reaction takes place in the presence of glutamine and ATP through an activated gamma-phospho-Glu-tRNA(Gln). The protein is Glutamyl-tRNA(Gln) amidotransferase subunit A of Ectopseudomonas mendocina (strain ymp) (Pseudomonas mendocina).